We begin with the raw amino-acid sequence, 37 residues long: Mu-cyrtautoxin-As1a (37 aa).

4 disulfide bridges follow: Cys-1–Cys-15, Cys-8–Cys-19, Cys-14–Cys-35, and Cys-26–Cys-31.

Belongs to the neurotoxin 13 (insecticidal toxin ABC) family. 01 (Aps III) subfamily. Expressed by the venom gland.

The protein resides in the secreted. The recombinant mu-cyrtautoxin-As1a potently and voltage-independently blocks voltage-gated sodium channels (Nav) of insects. It acts by pluging the outer vestibule of the channel. It acts in combination with a weak (30%) voltage-independent block of insect voltage-gated calcium (Cav) channels (low-voltage and high-voltage channels). Tested on DUM neurons, it inhibits sodium currents with an IC(50) of 540 nM (and a Hill coefficient &gt;1, reflecting an incomplete block at higher concentrations). In vivo, it induces flaccid paralysis in adult Australian sheep blowfly Lucilia cuprina. It is both paralytic and lethal, when injected into lepidopteran larvae. It is a slower acting toxin, being lethal at 24 hours, but not paralytic at 1 hour post-injection. This Apomastus schlingeri (Trap-door spider) protein is Mu-cyrtautoxin-As1a.